Here is a 642-residue protein sequence, read N- to C-terminus: Chaperone protein HtpG (642 aa).

Residues Met1–Arg350 are a; substrate-binding. Residues Glu351 to Arg567 form a b region. Residues Leu568–Lys642 are c.

This sequence belongs to the heat shock protein 90 family. As to quaternary structure, homodimer.

Its subcellular location is the cytoplasm. In terms of biological role, molecular chaperone. Has ATPase activity. The sequence is that of Chaperone protein HtpG from Marinomonas sp. (strain MWYL1).